The chain runs to 305 residues: Putative lipid kinase USA300HOU_0749 (305 aa).

Residues 3 to 139 (NKYTHGVLFY…YDVIKINNQY (137 aa)) enclose the DAGKc domain. ATP-binding positions include serine 44, 74-80 (GDGTVNE), and threonine 101. 3 residues coordinate Mg(2+): serine 220, aspartate 223, and glutamate 225. The active-site Proton acceptor is the glutamate 281.

The protein belongs to the diacylglycerol/lipid kinase family. Mg(2+) serves as cofactor.

Functionally, may catalyze the ATP-dependent phosphorylation of lipids other than diacylglycerol (DAG). This chain is Putative lipid kinase USA300HOU_0749, found in Staphylococcus aureus (strain USA300 / TCH1516).